The following is a 476-amino-acid chain: Sulfate adenylyltransferase subunit 1 (476 aa).

The region spanning 24–238 is the tr-type G domain; that stretch reads KSLLRFLTCG…ELLEYVDIDR (215 aa). Positions 33–40 are G1; sequence GSVDDGKS. Residue 33 to 40 participates in GTP binding; sequence GSVDDGKS. The tract at residues 91–95 is G2; the sequence is GITID. The interval 112-115 is G3; the sequence is DTPG. Residues 112–116 and 167–170 each bind GTP; these read DTPGH and NKMD. Residues 167–170 are G4; the sequence is NKMD. The G5 stretch occupies residues 205–207; sequence SAL.

The protein belongs to the TRAFAC class translation factor GTPase superfamily. Classic translation factor GTPase family. CysN/NodQ subfamily. As to quaternary structure, heterodimer composed of CysD, the smaller subunit, and CysN.

It carries out the reaction sulfate + ATP + H(+) = adenosine 5'-phosphosulfate + diphosphate. Its pathway is sulfur metabolism; hydrogen sulfide biosynthesis; sulfite from sulfate: step 1/3. Functionally, with CysD forms the ATP sulfurylase (ATPS) that catalyzes the adenylation of sulfate producing adenosine 5'-phosphosulfate (APS) and diphosphate, the first enzymatic step in sulfur assimilation pathway. APS synthesis involves the formation of a high-energy phosphoric-sulfuric acid anhydride bond driven by GTP hydrolysis by CysN coupled to ATP hydrolysis by CysD. This chain is Sulfate adenylyltransferase subunit 1, found in Vibrio cholerae serotype O1 (strain M66-2).